The primary structure comprises 260 residues: Caveolae-associated protein 3 (260 aa).

Positions 1-84 (MGESALESGP…SNTLAQLLAK (84 aa)) are interaction with CAVIN1. Residues 20-78 (VHAVTVVTLLEKLATMLETLRERQGGLAQRQGGLAGSVRRIQSNLGALSRSHDTTSNTL) form a leucine-zipper region. Residues S62 and S70 each carry the phosphoserine modification. K128 is covalently cross-linked (Glycyl lysine isopeptide (Lys-Gly) (interchain with G-Cter in SUMO2)). The interval 135-201 (AKAFQKAPEP…SGRKGHAAPT (67 aa)) is interaction with CAV1. Positions 140-260 (KAPEPLGPVE…AAVLQVESAA (121 aa)) are disordered. The segment covering 157–168 (AEAEESSDEEEP) has biased composition (acidic residues). Phosphoserine occurs at positions 162, 163, and 171. A compositionally biased stretch (pro residues) spans 201–210 (TPTPVKPPRL).

Belongs to the CAVIN family. As to quaternary structure, component of the CAVIN complex composed of CAVIN1, CAVIN2, CAVIN3 and CAVIN4. Interacts with PRKCD and with phosphatidylserine. Phosphatidylserine may form a bridge between PKC and PKC-binding partners and stabilize the binding. Interacts with PER2. Interacts with CAVIN1 and EPS15L1. Interacts (via leucine-zipper domain) with CAV1 in a cholesterol-sensitive manner. Post-translationally, in vitro, phosphorylated by PRKCD.

The protein resides in the cytoplasm. Its subcellular location is the membrane. The protein localises to the caveola. It is found in the cytosol. In terms of biological role, regulates the traffic and/or budding of caveolae. Plays a role in caveola formation in a tissue-specific manner. Required for the formation of caveolae in smooth muscle but not in the lung and heart endothelial cells. Regulates the equilibrium between cell surface-associated and cell surface-dissociated caveolae by promoting the rapid release of caveolae from the cell surface. Plays a role in the regulation of the circadian clock. Modulates the period length and phase of circadian gene expression and also regulates expression and interaction of the core clock components PER1/2 and CRY1/2. In Bos taurus (Bovine), this protein is Caveolae-associated protein 3 (CAVIN3).